The chain runs to 731 residues: E3 ubiquitin-protein ligase SMURF1 (731 aa).

The 120-residue stretch at 1–120 folds into the C2 domain; that stretch reads MSNVVTRRGG…TGYQRLDLCK (120 aa). The disordered stretch occupies residues 210–235; it reads RVRGPEVREHVQTPQNRSHGFQSQDL. A compositionally biased stretch (polar residues) spans 221–234; the sequence is QTPQNRSHGFQSQD. WW domains are found at residues 233-266 and 279-312; these read QDLP…DPRI and GSLP…DPRL. The region spanning 394-731 is the HECT domain; it reads RPKDLKKRLM…VEETSGFAVE (338 aa). The active-site Glycyl thioester intermediate is the Cys699.

The protein localises to the cytoplasm. The protein resides in the cell membrane. The catalysed reaction is S-ubiquitinyl-[E2 ubiquitin-conjugating enzyme]-L-cysteine + [acceptor protein]-L-lysine = [E2 ubiquitin-conjugating enzyme]-L-cysteine + N(6)-ubiquitinyl-[acceptor protein]-L-lysine.. It functions in the pathway protein modification; protein ubiquitination. In terms of biological role, E3 ubiquitin-protein ligase that acts as a negative regulator of BMP signaling pathway. Mediates ubiquitination and degradation of smad1 and smad5, 2 receptor-regulated SMADs specific for the BMP pathway. Promotes ubiquitination and subsequent proteasomal degradation of TRAF family members and rhoa. May play a role in dendrite formation by melanocytes. This chain is E3 ubiquitin-protein ligase SMURF1 (smurf1), found in Xenopus laevis (African clawed frog).